A 393-amino-acid chain; its full sequence is Dual-specificity RNA methyltransferase RlmN (393 aa).

Glu114 (proton acceptor) is an active-site residue. The Radical SAM core domain maps to 120-359 (EDDRATLCVS…VIVRKTRGDD (240 aa)). Cysteines 127 and 364 form a disulfide. [4Fe-4S] cluster is bound by residues Cys134, Cys138, and Cys141. S-adenosyl-L-methionine is bound by residues 188–189 (GE), Ser220, 242–244 (SLH), and Asn321. Cys364 functions as the S-methylcysteine intermediate in the catalytic mechanism.

The protein belongs to the radical SAM superfamily. RlmN family. It depends on [4Fe-4S] cluster as a cofactor.

It localises to the cytoplasm. It carries out the reaction adenosine(2503) in 23S rRNA + 2 reduced [2Fe-2S]-[ferredoxin] + 2 S-adenosyl-L-methionine = 2-methyladenosine(2503) in 23S rRNA + 5'-deoxyadenosine + L-methionine + 2 oxidized [2Fe-2S]-[ferredoxin] + S-adenosyl-L-homocysteine. The enzyme catalyses adenosine(37) in tRNA + 2 reduced [2Fe-2S]-[ferredoxin] + 2 S-adenosyl-L-methionine = 2-methyladenosine(37) in tRNA + 5'-deoxyadenosine + L-methionine + 2 oxidized [2Fe-2S]-[ferredoxin] + S-adenosyl-L-homocysteine. Specifically methylates position 2 of adenine 2503 in 23S rRNA and position 2 of adenine 37 in tRNAs. m2A2503 modification seems to play a crucial role in the proofreading step occurring at the peptidyl transferase center and thus would serve to optimize ribosomal fidelity. In Actinobacillus pleuropneumoniae serotype 5b (strain L20), this protein is Dual-specificity RNA methyltransferase RlmN.